Reading from the N-terminus, the 303-residue chain is MFGKKNLKWLGVVATLMMTFVQLGGALVTKTGSADGCGSSWPLCHGALIPEFFPIDTIIELSHRAVSALSLLMVLWLVITAWKHIGYIKEIKPLSIISVGFLLLQALIGAAAVIWQQNDYVLALHFGISLISFSSVFLITLIIFSIDQKYEADELYIKKPLRRLTWLMAIIIYCGVYTGALVRHADASLAYGGWPLPFHDLVPHSEQDWVQLTHRIMAFIVFTIIMITYIHAVKNYPNNRTVHYGYTAAFILVILQVITGALSIMTNVNLLIALFHALFITYLFGMTTYFIMLMLRSVRSDKQ.

Residues 1 to 8 are Cytoplasmic-facing; it reads MFGKKNLK. Residues 9-29 form a helical membrane-spanning segment; sequence WLGVVATLMMTFVQLGGALVT. Residues 30 to 67 are Extracellular-facing; it reads KTGSADGCGSSWPLCHGALIPEFFPIDTIIELSHRAVS. Cysteines 37 and 44 form a disulfide. Residue Glu-60 is part of the active site. His-63 lines the heme o pocket. A helical membrane pass occupies residues 68–88; that stretch reads ALSLLMVLWLVITAWKHIGYI. The Cytoplasmic portion of the chain corresponds to 89–93; the sequence is KEIKP. The chain crosses the membrane as a helical span at residues 94 to 114; sequence LSIISVGFLLLQALIGAAAVI. The Extracellular portion of the chain corresponds to 115 to 125; that stretch reads WQQNDYVLALH. Residue His-125 participates in heme o binding. The chain crosses the membrane as a helical span at residues 126–146; that stretch reads FGISLISFSSVFLITLIIFSI. Residues 147–163 lie on the Cytoplasmic side of the membrane; the sequence is DQKYEADELYIKKPLRR. A helical membrane pass occupies residues 164–184; sequence LTWLMAIIIYCGVYTGALVRH. The Extracellular segment spans residues 185 to 215; sequence ADASLAYGGWPLPFHDLVPHSEQDWVQLTHR. Residue His-214 participates in heme b binding. A helical membrane pass occupies residues 216–236; it reads IMAFIVFTIIMITYIHAVKNY. Residues 237 to 244 are Cytoplasmic-facing; sequence PNNRTVHY. A helical transmembrane segment spans residues 245–265; sequence GYTAAFILVILQVITGALSIM. Residues 266 to 270 are Extracellular-facing; the sequence is TNVNL. A helical transmembrane segment spans residues 271–291; that stretch reads LIALFHALFITYLFGMTTYFI. Heme b is bound at residue His-276. Residues 292–303 lie on the Cytoplasmic side of the membrane; that stretch reads MLMLRSVRSDKQ.

The protein belongs to the COX15/CtaA family. Type 1 subfamily. As to quaternary structure, interacts with CtaB. Requires heme b as cofactor.

It is found in the cell membrane. It catalyses the reaction Fe(II)-heme o + 2 A + H2O = Fe(II)-heme a + 2 AH2. It participates in porphyrin-containing compound metabolism; heme A biosynthesis; heme A from heme O: step 1/1. Catalyzes the conversion of heme O to heme A by two successive hydroxylations of the methyl group at C8. The first hydroxylation forms heme I, the second hydroxylation results in an unstable dihydroxymethyl group, which spontaneously dehydrates, resulting in the formyl group of heme A. This Staphylococcus aureus (strain MSSA476) protein is Heme A synthase.